Consider the following 113-residue polypeptide: Prefoldin subunit beta (113 aa).

Belongs to the prefoldin subunit beta family. As to quaternary structure, heterohexamer of two alpha and four beta subunits.

Its subcellular location is the cytoplasm. Molecular chaperone capable of stabilizing a range of proteins. Seems to fulfill an ATP-independent, HSP70-like function in archaeal de novo protein folding. In Methanococcus vannielii (strain ATCC 35089 / DSM 1224 / JCM 13029 / OCM 148 / SB), this protein is Prefoldin subunit beta.